The primary structure comprises 725 residues: Polyribonucleotide nucleotidyltransferase (725 aa).

The Mg(2+) site is built by D487 and D493. Residues 554-613 form the KH domain; it reads PRIETMQIPTDKIREVIGTGGKVIREIVEKTGAKIDIQDTGVIKIASSDAKAIKAAYNWI. The region spanning 623-691 is the S1 motif domain; it reads GMIYDGTVVK…ERGKIRLSMK (69 aa). Residues 697-725 are disordered; sequence TGEDITEKLKAEREADRNRERQARQSAGE. Over residues 701–719 the composition is skewed to basic and acidic residues; the sequence is ITEKLKAEREADRNRERQA.

Belongs to the polyribonucleotide nucleotidyltransferase family. Requires Mg(2+) as cofactor.

The protein resides in the cytoplasm. It catalyses the reaction RNA(n+1) + phosphate = RNA(n) + a ribonucleoside 5'-diphosphate. Its function is as follows. Involved in mRNA degradation. Catalyzes the phosphorolysis of single-stranded polyribonucleotides processively in the 3'- to 5'-direction. This Methylobacterium nodulans (strain LMG 21967 / CNCM I-2342 / ORS 2060) protein is Polyribonucleotide nucleotidyltransferase.